The following is a 336-amino-acid chain: MCLLMEINNNANNTNTTIDNHKAKMSLVLSTDAKPRLKWTCDLHHKFIEAVNQLGGPNKATPKGLMKVMEIPGLTLYHLKSHLQKYRLGKSMKFDDNKLEVSSASENQEVESKNDSRDLRGCSVTEENSNPAKEGLQITEALQMQMEVQKKLHEQIEVQRHLQVKIEAQGKYLQSVLMKAQQTLAGYSSSNLGMDFARTELSRLASMVNRGCPSTSFSELTQVEEEEEGFLWYKKPENRGISQLRCSVESSLTSSETSETKLDTDNNLNKSIELPLMEINSEVMKGKKRSINDVVCVEQPLMKRAFGVDDDEHLKLSLNTYKKDMEACTNIGLGFN.

Residues 31–91 (TDAKPRLKWT…HLQKYRLGKS (61 aa)) enclose the HTH myb-type domain. The segment at residues 62 to 87 (PKGLMKVMEIPGLTLYHLKSHLQKYR) is a DNA-binding region (H-T-H motif). Residues 100-134 (EVSSASENQEVESKNDSRDLRGCSVTEENSNPAKE) form a disordered region. Residues 110–120 (VESKNDSRDLR) are compositionally biased toward basic and acidic residues. Residues 139–159 (TEALQMQMEVQKKLHEQIEVQ) are a coiled coil. The short motif at 152 to 157 (LHEQIE) is the LHEQLE element.

This sequence belongs to the MYB-CC family.

Its subcellular location is the nucleus. This is Myb family transcription factor PHL8 from Arabidopsis thaliana (Mouse-ear cress).